Here is a 215-residue protein sequence, read N- to C-terminus: Probable phosphoglycerate mutase GpmB (215 aa).

Residues 8–15, 21–22, R58, K60, 82–85, 104–105, and 151–152 contribute to the substrate site; these read RHGETQWN, QG, ELDM, RR, and GI. H9 serves as the catalytic Tele-phosphohistidine intermediate. E82 acts as the Proton donor/acceptor in catalysis.

It belongs to the phosphoglycerate mutase family. GpmB subfamily.

It carries out the reaction (2R)-2-phosphoglycerate = (2R)-3-phosphoglycerate. It functions in the pathway carbohydrate degradation; glycolysis; pyruvate from D-glyceraldehyde 3-phosphate: step 3/5. This Salmonella paratyphi A (strain AKU_12601) protein is Probable phosphoglycerate mutase GpmB.